We begin with the raw amino-acid sequence, 292 residues long: MRWPPWSSESTNDEQKQTPSSWLSSAANKPSSILDWTAFTELRTIIPTVVLTSGILIAVRFHRRYLRRIPDAPSISSSYLRRRSIFGQVTSVGDGDNFRIFHTPGGRMAGWGWLPWKKVPTVKKDLKDKTIHIRLAGVDAPELAHFGRPEQPFARDAHTWLTSYLSNRRVRALVHRQDQYSRVVASVFVRRAFDFPPFRRRDVSYEMLKRGLATVYEAKIGSEFGGDKMEKKYRKAEWWAKKRARGLWKDYRRVGSGWESPREYKNRMGMGDPLPIEKGNGKGNGKGKIGQK.

The tract at residues 1–27 (MRWPPWSSESTNDEQKQTPSSWLSSAA) is disordered. Residues 17–27 (QTPSSWLSSAA) show a composition bias toward polar residues. The chain crosses the membrane as a helical span at residues 45–61 (IIPTVVLTSGILIAVRF). Residues 83-250 (RSIFGQVTSV…KKRARGLWKD (168 aa)) enclose the TNase-like domain. Arg-134 is a catalytic residue. Asp-139 is a binding site for Ca(2+). Residues Glu-142 and Arg-182 contribute to the active site. Positions 257–292 (GWESPREYKNRMGMGDPLPIEKGNGKGNGKGKIGQK) are disordered. Residues 281–292 (GKGNGKGKIGQK) show a composition bias toward gly residues.

This sequence belongs to the LCL3 family.

The protein resides in the mitochondrion. It is found in the membrane. This chain is Probable endonuclease lcl3 (lcl3), found in Penicillium rubens (strain ATCC 28089 / DSM 1075 / NRRL 1951 / Wisconsin 54-1255) (Penicillium chrysogenum).